The chain runs to 767 residues: Two-component response regulator-like PRR73 (767 aa).

The tract at residues M1–E64 is disordered. The Response regulatory domain occupies R82–W200. The span at S205–G214 shows a compositional bias: low complexity. Disordered regions lie at residues S205–W272, R312–T388, A476–V546, A646–G701, and N727–R767. The span at D238–L252 shows a compositional bias: acidic residues. Composition is skewed to polar residues over residues D263 to W272, R343 to T361, and C488 to A497. Residues G518–S531 show a composition bias toward low complexity. Residues T532–R543 show a composition bias toward polar residues. The span at G689 to S700 shows a compositional bias: gly residues. Positions R712–Q754 constitute a CCT domain. Positions N727 to K738 are enriched in basic residues.

This sequence belongs to the ARR-like family.

The protein resides in the nucleus. In terms of biological role, controls photoperiodic flowering response. Seems to be one of the component of the circadian clock. Expression of several members of the ARR-like family is controlled by circadian rhythm. The particular coordinated sequential expression of PRR73, PRR37, PRR95, PRR59 and PPR1 result to circadian waves that may be at the basis of the endogenous circadian clock. This Oryza sativa subsp. indica (Rice) protein is Two-component response regulator-like PRR73 (PRR73).